The sequence spans 560 residues: Oxygen-dependent choline dehydrogenase (560 aa).

8 to 37 serves as a coordination point for FAD; that stretch reads DYIIIGAGSAGNVLATRLTEDADVSVLLLE. Catalysis depends on H475, which acts as the Proton acceptor.

The protein belongs to the GMC oxidoreductase family. Requires FAD as cofactor.

It catalyses the reaction choline + A = betaine aldehyde + AH2. It carries out the reaction betaine aldehyde + NAD(+) + H2O = glycine betaine + NADH + 2 H(+). It functions in the pathway amine and polyamine biosynthesis; betaine biosynthesis via choline pathway; betaine aldehyde from choline (cytochrome c reductase route): step 1/1. Its function is as follows. Involved in the biosynthesis of the osmoprotectant glycine betaine. Catalyzes the oxidation of choline to betaine aldehyde and betaine aldehyde to glycine betaine at the same rate. This is Oxygen-dependent choline dehydrogenase from Stenotrophomonas maltophilia (strain R551-3).